A 333-amino-acid polypeptide reads, in one-letter code: Fe-S cluster assembly protein dre2 (333 aa).

Positions 1–29 are disordered; that stretch reads MSPITLDLTSDFNPANTTGAGSSSSQPRT. Polar residues predominate over residues 7–28; it reads DLTSDFNPANTTGAGSSSSQPR. The tract at residues 23–158 is N-terminal SAM-like domain; the sequence is SSSQPRTLLV…KPDYAEEEAV (136 aa). The interval 159–225 is linker; the sequence is PLRFGLKRKT…EDTLLTEADL (67 aa). Positions 235, 246, 249, and 251 each coordinate [2Fe-2S] cluster. Positions 235 to 251 are fe-S binding site A; the sequence is CQPKPGKKRRACKDCTC. [4Fe-4S] cluster-binding residues include C296, C299, C307, and C310. 2 short sequence motifs (cx2C motif) span residues 296 to 299 and 307 to 310; these read CGSC and CAGC. Residues 296–310 form a fe-S binding site B region; it reads CGSCALGDAFRCAGC.

It belongs to the anamorsin family. As to quaternary structure, monomer. Interacts with tah18. Interacts with mia40. It depends on [2Fe-2S] cluster as a cofactor. Requires [4Fe-4S] cluster as cofactor.

The protein resides in the cytoplasm. The protein localises to the mitochondrion intermembrane space. Component of the cytosolic iron-sulfur (Fe-S) protein assembly (CIA) machinery required for the maturation of extramitochondrial Fe-S proteins. Part of an electron transfer chain functioning in an early step of cytosolic Fe-S biogenesis, facilitating the de novo assembly of a [4Fe-4S] cluster on the scaffold complex cfd1-nbp35. Electrons are transferred to dre2 from NADPH via the FAD- and FMN-containing protein tah18. Tah18-dre2 are also required for the assembly of the diferric tyrosyl radical cofactor of ribonucleotide reductase (RNR), probably by providing electrons for reduction during radical cofactor maturation in the catalytic small subunit rnr2. This Neurospora crassa (strain ATCC 24698 / 74-OR23-1A / CBS 708.71 / DSM 1257 / FGSC 987) protein is Fe-S cluster assembly protein dre2.